Reading from the N-terminus, the 94-residue chain is Acylphosphatase (94 aa).

One can recognise an Acylphosphatase-like domain in the interval 8–94 (RLTAWVHGRV…REQITGFHER (87 aa)). Catalysis depends on residues R23 and N41.

Belongs to the acylphosphatase family.

The enzyme catalyses an acyl phosphate + H2O = a carboxylate + phosphate + H(+). The sequence is that of Acylphosphatase (acyP) from Mycobacterium sp. (strain JLS).